We begin with the raw amino-acid sequence, 179 residues long: Inner membrane-spanning protein YciB (179 aa).

5 consecutive transmembrane segments (helical) span residues 11 to 31 (ILFF…TLII), 52 to 69 (LIMG…AYFN), 71 to 91 (LEFL…ILLV), 121 to 141 (LGWA…SQYL), and 149 to 169 (FKTF…GVYI).

This sequence belongs to the YciB family.

The protein resides in the cell inner membrane. Functionally, plays a role in cell envelope biogenesis, maintenance of cell envelope integrity and membrane homeostasis. The sequence is that of Inner membrane-spanning protein YciB from Histophilus somni (strain 129Pt) (Haemophilus somnus).